The chain runs to 63 residues: Sarcotoxin-1B (63 aa).

Positions 1-23 are cleaved as a signal peptide; sequence MNFNKVFIFVALILAVFAGQSQA. Position 62 is an arginine amide (Arg62).

Belongs to the cecropin family.

It is found in the secreted. In terms of biological role, sarcotoxins, which are potent bactericidal proteins, are produced in response to injury. They are cytotoxic to both Gram-positive and Gram-negative bacteria. The protein is Sarcotoxin-1B of Sarcophaga peregrina (Flesh fly).